A 68-amino-acid polypeptide reads, in one-letter code: Purkinje cell protein 4-like protein 1 (68 aa).

The span at 1–16 (MSELNTKTSPATNQAA) shows a compositional bias: polar residues. Positions 1–45 (MSELNTKTSPATNQAAGQEEKGKAGNVKKAEEEEEIDIDLTAPET) are disordered. The residue at position 8 (Thr-8) is a Phosphothreonine. The span at 18–31 (QEEKGKAGNVKKAE) shows a compositional bias: basic and acidic residues. The region spanning 45-68 (TEKAALAIQGKFRRFQKRKKDPSS) is the IQ domain.

The protein belongs to the PCP4 family.

In Homo sapiens (Human), this protein is Purkinje cell protein 4-like protein 1 (PCP4L1).